The primary structure comprises 260 residues: UPF0246 protein BamMC406_2140 (260 aa).

Belongs to the UPF0246 family.

In Burkholderia ambifaria (strain MC40-6), this protein is UPF0246 protein BamMC406_2140.